Consider the following 252-residue polypeptide: Probable transcriptional regulatory protein HNE_0161 (252 aa).

Belongs to the TACO1 family.

It is found in the cytoplasm. This is Probable transcriptional regulatory protein HNE_0161 from Hyphomonas neptunium (strain ATCC 15444).